The sequence spans 230 residues: Ribonuclease 3 (230 aa).

Residues 5-125 form the RNase III domain; that stretch reads YSRFYNILGY…VIGAIYLDSD (121 aa). A Mg(2+)-binding site is contributed by Glu40. The active site involves Asp44. 2 residues coordinate Mg(2+): Asp111 and Glu114. Glu114 is a catalytic residue. A DRBM domain is found at 153-223; sequence DSKSKLQEIL…AEKMIEMLSQ (71 aa).

It belongs to the ribonuclease III family. In terms of assembly, homodimer. It depends on Mg(2+) as a cofactor.

It is found in the cytoplasm. The enzyme catalyses Endonucleolytic cleavage to 5'-phosphomonoester.. Functionally, digests double-stranded RNA. Involved in the processing of primary rRNA transcript to yield the immediate precursors to the large and small rRNAs (23S and 16S). Processes some mRNAs, and tRNAs when they are encoded in the rRNA operon. Processes pre-crRNA and tracrRNA of type II CRISPR loci if present in the organism. The sequence is that of Ribonuclease 3 from Francisella tularensis subsp. tularensis (strain FSC 198).